The following is a 396-amino-acid chain: Subtilisin-like protease 5 (396 aa).

Positions 1–20 are cleaved as a signal peptide; it reads MTGFLTILSLSLAALSVTNA. The propeptide occupies 21–116; it reads AQILSVPQGA…VEPDAIIKQH (96 aa). The 78-residue stretch at 37–114 folds into the Inhibitor I9 domain; it reads YIVVMKDDTS…AFVEPDAIIK (78 aa). The region spanning 125–396 is the Peptidase S8 domain; that stretch reads PWGLSRLSNR…SRLLYNGSGR (272 aa). Catalysis depends on charge relay system residues D156 and H187. 2 N-linked (GlcNAc...) asparagine glycosylation sites follow: N230 and N248. Catalysis depends on S342, which acts as the Charge relay system. The disordered stretch occupies residues 376-396; that stretch reads PTIRNPGPDTTSRLLYNGSGR. N392 is a glycosylation site (N-linked (GlcNAc...) asparagine).

It belongs to the peptidase S8 family.

The protein localises to the secreted. Functionally, secreted subtilisin-like serine protease with keratinolytic activity that contributes to pathogenicity. This chain is Subtilisin-like protease 5 (SUB5), found in Arthroderma gypseum (strain ATCC MYA-4604 / CBS 118893) (Microsporum gypseum).